The sequence spans 276 residues: Large ribosomal subunit protein uL2 (276 aa).

Residues 224-276 are disordered; it reads AMNPIDHPHGGGEGKTSGGRNPVTPWGVPTKGKKTRKRNKSSNKYIKRVSDKG. The span at 254–270 shows a compositional bias: basic residues; the sequence is KGKKTRKRNKSSNKYIK.

The protein belongs to the universal ribosomal protein uL2 family. As to quaternary structure, part of the 50S ribosomal subunit. Forms a bridge to the 30S subunit in the 70S ribosome.

Functionally, one of the primary rRNA binding proteins. Required for association of the 30S and 50S subunits to form the 70S ribosome, for tRNA binding and peptide bond formation. It has been suggested to have peptidyltransferase activity; this is somewhat controversial. Makes several contacts with the 16S rRNA in the 70S ribosome. The protein is Large ribosomal subunit protein uL2 of Ehrlichia chaffeensis (strain ATCC CRL-10679 / Arkansas).